A 310-amino-acid chain; its full sequence is Coproporphyrin III ferrochelatase (310 aa).

Y13 provides a ligand contact to Fe-coproporphyrin III. Y13 lines the N-methylmesoporphyrin pocket. A Mg(2+)-binding site is contributed by E20. Residue R30 participates in Fe-coproporphyrin III binding. R31–R33 contacts N-methylmesoporphyrin. R46 provides a ligand contact to Mg(2+). Fe-coproporphyrin III contacts are provided by residues R46 to Y47, S54, and Y125. Residues H183 and K188 each coordinate N-methylmesoporphyrin. H183 is a binding site for Fe(2+). Residue E264 participates in Fe(2+) binding. Mg(2+) is bound by residues D268 and E272.

This sequence belongs to the ferrochelatase family. In terms of assembly, monomer. Interacts with frataxin/Fra.

Its subcellular location is the cytoplasm. The enzyme catalyses Fe-coproporphyrin III + 2 H(+) = coproporphyrin III + Fe(2+). It functions in the pathway porphyrin-containing compound metabolism; protoheme biosynthesis. With respect to regulation, stimulated by Mg(2+). Inhibited by Cd(2+). Inhibited by N-methylmesoporphyrin (N-MeMP) and 2,4-disulfonic acid deuteroporphyrin IX (dSDP). Its function is as follows. Involved in coproporphyrin-dependent heme b biosynthesis. Catalyzes the insertion of ferrous iron into coproporphyrin III to form Fe-coproporphyrin III. It can also insert iron into protoporphyrin IX. Has weaker activity with 2,4 disulfonate, deuteroporphyrin and 2,4 hydroxyethyl. In vitro, can also use Zn(2+) or Cu(2+). The protein is Coproporphyrin III ferrochelatase of Bacillus subtilis (strain 168).